The primary structure comprises 793 residues: Protein zer-1 homolog (793 aa).

LRR repeat units lie at residues 84–108 (RTSL…LMRH), 187–210 (LHDL…ALGS), and 269–294 (LRHL…ESTT).

Belongs to the zyg-11 family.

Functionally, serves as substrate adapter subunit in an E3 ubiquitin ligase complex CG12084-cul-2-elongin BC. Targets substrates bearing N-terminal glycine degrons for proteasomal degradation. The protein is Protein zer-1 homolog of Drosophila melanogaster (Fruit fly).